A 616-amino-acid polypeptide reads, in one-letter code: Pentatricopeptide repeat-containing protein At4g15720 (616 aa).

PPR repeat units follow at residues 63–93 (DTFT…MCEP), 94–128 (NVVS…RPVP), 130–164 (NEYT…GLRR), 165–199 (NIVV…GRNV), 200–228 (VSWT…FNAA), 235–269 (NQFM…GYES), 270–300 (NTVV…IRCH), 301–335 (SVIS…RINP), 336–371 (NYVT…GVVP), and 372–402 (DSRH…IEVG). Positions 409-484 (LWGALLSAGR…ERACSWIENK (76 aa)) are type E motif. The interval 485–515 (DSVYVFHAGDLSCDESGEIERFLKDLEKRMK) is type E(+) motif. Residues 522-616 (SSSMITTSSS…NGSCTCRDYW (95 aa)) are type DYW motif.

Belongs to the PPR family. PCMP-H subfamily.

The sequence is that of Pentatricopeptide repeat-containing protein At4g15720 (PCMP-H1) from Arabidopsis thaliana (Mouse-ear cress).